Reading from the N-terminus, the 748-residue chain is Catalase-peroxidase (748 aa).

Positions 92-238 (WHSAGTYRIG…LAAVQMGLIY (147 aa)) form a cross-link, tryptophyl-tyrosyl-methioninium (Trp-Tyr) (with M-264). Catalysis depends on H93, which acts as the Proton acceptor. The tryptophyl-tyrosyl-methioninium (Tyr-Met) (with W-92) cross-link spans 238 to 264 (YVNPEGPDGNPDPIASARDIRDTFARM). H279 is a binding site for heme b.

This sequence belongs to the peroxidase family. Peroxidase/catalase subfamily. As to quaternary structure, homodimer or homotetramer. Heme b serves as cofactor. In terms of processing, formation of the three residue Trp-Tyr-Met cross-link is important for the catalase, but not the peroxidase activity of the enzyme.

The catalysed reaction is H2O2 + AH2 = A + 2 H2O. It carries out the reaction 2 H2O2 = O2 + 2 H2O. Its function is as follows. Bifunctional enzyme with both catalase and broad-spectrum peroxidase activity. The protein is Catalase-peroxidase of Xanthomonas axonopodis pv. citri (strain 306).